Consider the following 642-residue polypeptide: Threonine--tRNA ligase (642 aa).

Residues 1–61 form the TGS domain; it reads MPVITLPDGS…ETDSTLSIIT (61 aa). A catalytic region spans residues 243-534; that stretch reads DHRKIGKQLD…LTEEFAGFFP (292 aa). Zn(2+)-binding residues include Cys-334, His-385, and His-511.

It belongs to the class-II aminoacyl-tRNA synthetase family. As to quaternary structure, homodimer. Zn(2+) serves as cofactor.

It localises to the cytoplasm. The enzyme catalyses tRNA(Thr) + L-threonine + ATP = L-threonyl-tRNA(Thr) + AMP + diphosphate + H(+). Its function is as follows. Catalyzes the attachment of threonine to tRNA(Thr) in a two-step reaction: L-threonine is first activated by ATP to form Thr-AMP and then transferred to the acceptor end of tRNA(Thr). Also edits incorrectly charged L-seryl-tRNA(Thr). The protein is Threonine--tRNA ligase of Klebsiella pneumoniae (strain 342).